The sequence spans 173 residues: Translation initiation factor IF-3 (173 aa).

It belongs to the IF-3 family. In terms of assembly, monomer.

It localises to the cytoplasm. Its function is as follows. IF-3 binds to the 30S ribosomal subunit and shifts the equilibrium between 70S ribosomes and their 50S and 30S subunits in favor of the free subunits, thus enhancing the availability of 30S subunits on which protein synthesis initiation begins. This chain is Translation initiation factor IF-3, found in Clostridium tetani (strain Massachusetts / E88).